Here is a 111-residue protein sequence, read N- to C-terminus: Nucleoid-associated protein glr3498 (111 aa).

The protein belongs to the YbaB/EbfC family. As to quaternary structure, homodimer.

The protein localises to the cytoplasm. The protein resides in the nucleoid. Its function is as follows. Binds to DNA and alters its conformation. May be involved in regulation of gene expression, nucleoid organization and DNA protection. This Gloeobacter violaceus (strain ATCC 29082 / PCC 7421) protein is Nucleoid-associated protein glr3498.